Consider the following 446-residue polypeptide: Sensor protein PfeS (446 aa).

The Cytoplasmic segment spans residues 1 to 9; the sequence is MRRHPLLWK. Residues 10-30 form a helical membrane-spanning segment; it reads LALLQVGFCLLLTWLIYTWGL. The Periplasmic portion of the chain corresponds to 31–155; that stretch reads SVERSTYFLA…LLPGGLTPWT (125 aa). The chain crosses the membrane as a helical span at residues 156 to 176; that stretch reads HLVTHGIVPTLLAALLGLLLY. Residues 177-233 enclose the HAMP domain; that stretch reads RHLVVPLNRLRDRADALRADELESTPLAAPLAARRDELGELAQALEHMAERLRLSLA. The Cytoplasmic portion of the chain corresponds to 177-446; it reads RHLVVPLNRL…CLHLWLPAAA (270 aa). Residues 241–446 enclose the Histidine kinase domain; that stretch reads TLSHELRTPL…CLHLWLPAAA (206 aa). Position 244 is a phosphohistidine; by autocatalysis (histidine 244).

It localises to the cell inner membrane. It catalyses the reaction ATP + protein L-histidine = ADP + protein N-phospho-L-histidine.. Member of the two-component regulatory system PfeR/PfeS. May activate PfeR by phosphorylation. This is Sensor protein PfeS (pfeS) from Pseudomonas aeruginosa (strain ATCC 15692 / DSM 22644 / CIP 104116 / JCM 14847 / LMG 12228 / 1C / PRS 101 / PAO1).